The primary structure comprises 494 residues: Ribonuclease H (494 aa).

2 disordered regions span residues 79–148 (NRRR…APPP) and 205–231 (RSGL…VGLR). 2 stretches are compositionally biased toward polar residues: residues 84–100 (GSTS…NQLA) and 131–143 (PTTS…TRTS). Positions 272–488 (SSVPQVVYVD…ADVLAVAGAR (217 aa)) constitute an RNase H type-1 domain. Residues Asp281, Glu325, Asp374, and Asp480 each contribute to the Mg(2+) site.

This sequence belongs to the RNase H family. In terms of assembly, monomer. Requires Mg(2+) as cofactor.

The catalysed reaction is Endonucleolytic cleavage to 5'-phosphomonoester.. Functionally, endonuclease that specifically degrades the RNA of RNA-DNA hybrids. The sequence is that of Ribonuclease H (RNH1) from Crithidia fasciculata.